The primary structure comprises 233 residues: MKRGFTLVEVLVAMAILVVVLAVGVRYFASTSELARNTQARSELQDRVRMVMQVVTADLQMAGARYWNSGNQNQAFSLPLPPLSGSNMGPKDTLTLYYVTSLRDLASACRRVDYGFEGDTLRRSDVNATPSSGSDCTTPPPNSQPLAEGMLALDIQYQCSDGSRKDTPDCGTDAYPRSAKVTVAGYSLTSVTNPGPASLTTVTGKTLACPQGRACYALTQEVLMPNLKPLPTP.

Positions 1 to 4 (MKRG) are cleaved as a propeptide — leader sequence. Residue Phe5 is modified to N-methylphenylalanine. Residues 5 to 25 (FTLVEVLVAMAILVVVLAVGV) traverse the membrane as a helical segment. The segment at 121-143 (LRRSDVNATPSSGSDCTTPPPNS) is disordered. A compositionally biased stretch (polar residues) spans 126-137 (VNATPSSGSDCT).

It localises to the cell inner membrane. It is found in the cell outer membrane. Its subcellular location is the periplasm. Functionally, plays an essential role in natural DNA transformation but is not required for pilus biogenesis. The sequence is that of Pilin-like protein PilA3 (pilA3) from Thermus thermophilus (strain ATCC BAA-163 / DSM 7039 / HB27).